The following is a 99-amino-acid chain: MPKFALKALWLENDLAIAVDQVVAKNRSPLTHYFFWPRDDAWEQLKAELESKTWISEVDRIELLNRATELINYWQNGGRNRPISEAQAQFPDILIGGNS.

It belongs to the chloroplast-specific ribosomal protein cS23 family. As to quaternary structure, part of the 30S ribosomal subunit.

Probably a ribosomal protein or a ribosome-associated protein. In Synechococcus sp. (strain JA-2-3B'a(2-13)) (Cyanobacteria bacterium Yellowstone B-Prime), this protein is Probable small ribosomal subunit protein cS23.